The following is a 451-amino-acid chain: AAA-ATPase At3g50940 (451 aa).

Positions 1-25 are cleaved as a signal peptide; the sequence is MSSSSESHLATAKTALTAVASVAAA. An ATP-binding site is contributed by 254–261; the sequence is GPPGTGKS.

This sequence belongs to the AAA ATPase family. BCS1 subfamily. Mg(2+) serves as cofactor.

The enzyme catalyses ATP + H2O = ADP + phosphate + H(+). In Arabidopsis thaliana (Mouse-ear cress), this protein is AAA-ATPase At3g50940.